A 117-amino-acid polypeptide reads, in one-letter code: Large ribosomal subunit protein bL20 (117 aa).

It belongs to the bacterial ribosomal protein bL20 family.

In terms of biological role, binds directly to 23S ribosomal RNA and is necessary for the in vitro assembly process of the 50S ribosomal subunit. It is not involved in the protein synthesizing functions of that subunit. The polypeptide is Large ribosomal subunit protein bL20 (Thermomicrobium roseum (strain ATCC 27502 / DSM 5159 / P-2)).